A 201-amino-acid polypeptide reads, in one-letter code: TATA-box-binding protein 2 (201 aa).

2 tandem repeats follow at residues Leu-26–Ile-102 and Ile-116–Leu-193.

Belongs to the TBP family. In terms of assembly, belongs to the TFIID complex together with the TBP-associated factors (TAFs). Binds DNA as monomer.

Its subcellular location is the nucleus. In terms of biological role, general transcription factor that functions at the core of the DNA-binding multiprotein factor TFIID. Binding of TFIID to the TATA box is the initial transcriptional step of the pre-initiation complex (PIC), playing a role in the activation of eukaryotic genes transcribed by RNA polymerase II. This Triticum aestivum (Wheat) protein is TATA-box-binding protein 2 (TBP2).